The chain runs to 130 residues: Glycine cleavage system H protein (130 aa).

In terms of domain architecture, Lipoyl-binding spans 22–103; it reads KAYIGISDCA…PYGSWIAAIE (82 aa). Residue Lys-63 is modified to N6-lipoyllysine.

Belongs to the GcvH family. The glycine cleavage system is composed of four proteins: P, T, L and H. Requires (R)-lipoate as cofactor.

Its function is as follows. The glycine cleavage system catalyzes the degradation of glycine. The H protein shuttles the methylamine group of glycine from the P protein to the T protein. The sequence is that of Glycine cleavage system H protein from Clostridium botulinum (strain ATCC 19397 / Type A).